The primary structure comprises 350 residues: Geranylgeranyl pyrophosphate synthase (350 aa).

Isopentenyl diphosphate contacts are provided by Lys-66, Arg-69, and His-98. Mg(2+)-binding residues include Asp-105 and Asp-109. Dimethylallyl diphosphate is bound at residue Arg-114. Residue Arg-115 coordinates isopentenyl diphosphate. Positions 200, 201, 236, 243, and 263 each coordinate dimethylallyl diphosphate.

Belongs to the FPP/GGPP synthase family. Mg(2+) serves as cofactor.

The catalysed reaction is isopentenyl diphosphate + dimethylallyl diphosphate = (2E)-geranyl diphosphate + diphosphate. The enzyme catalyses isopentenyl diphosphate + (2E)-geranyl diphosphate = (2E,6E)-farnesyl diphosphate + diphosphate. It carries out the reaction isopentenyl diphosphate + (2E,6E)-farnesyl diphosphate = (2E,6E,10E)-geranylgeranyl diphosphate + diphosphate. It functions in the pathway secondary metabolite biosynthesis; terpenoid biosynthesis. Its function is as follows. Geranylgeranyl pyrophosphate synthase; part of the gene cluster that mediates the biosynthesis of pleuromutilin, a tricyclic diterpene showing antibacterial properties. The geranylgeranyl diphosphate (GGPP) synthase catalyzes the first step in pleuromutilin biosynthesis. GGPP is then substrate of the premutilin synthase (PS) to yield premutilin. Premutilin synthase is a bifunctional enzyme composed of the fusion of a class II diterpene cyclase (DTC) and a class I diterpene synthase (DTS), with the corresponding domains and active sites containing characteristic aspartate-rich motifs. GGPP is first converted to mutildienyl-diphosphate (MPP) at the class II DTC site. MPP is subsequently further cyclized at the class I DTS site, followed by a 1,5-hydride shift and addition of water prior to terminating deprotonation, to yield premutilin. In addition to the aforementioned GGPP synthase and bifunctional diterpene synthase, the cluster also contains three cytochrome P450 monooxygenases, a short-chain alcohol dehydrogenase, and an acyltransferase, involved in the conversion of premutilin to pleuromutilin. The cytochrome P450 monooxygenases P450-1 and P450-2 hydroxylate premutilin at C-11 and C-3, respectively, producing 11-hydroxypremutilin and 3-hydroxypremutilin. The combination of the actions of both ple5 and ple6 leads to the production of 3,11-dihydroxypremutilin. The short chain dehydrogenase SDR further converts 3,11-dihydroxypremutilin into mutilin. The acetyltransferase ATF then acetylates mutilin to produce 14-O-acetylmutilin. Finally, the cytochrome P450 monooxygenase P450-3 catalyzes hydroxylation on the alpha position of the acetyl side chain of 14-O-acetylmutilin to yield pleuromutilin. The protein is Geranylgeranyl pyrophosphate synthase of Clitopilus passeckerianus (Pleurotus passeckerianus).